We begin with the raw amino-acid sequence, 183 residues long: Adenine phosphoribosyltransferase (183 aa).

Belongs to the purine/pyrimidine phosphoribosyltransferase family. In terms of assembly, homodimer.

It is found in the cytoplasm. The enzyme catalyses AMP + diphosphate = 5-phospho-alpha-D-ribose 1-diphosphate + adenine. Its pathway is purine metabolism; AMP biosynthesis via salvage pathway; AMP from adenine: step 1/1. Catalyzes a salvage reaction resulting in the formation of AMP, that is energically less costly than de novo synthesis. The chain is Adenine phosphoribosyltransferase from Shewanella piezotolerans (strain WP3 / JCM 13877).